We begin with the raw amino-acid sequence, 326 residues long: Thioredoxin reductase (326 aa).

55 to 62 (EGPEPGGQ) contacts FAD. A disulfide bridge connects residues Cys156 and Cys159. 298–307 (DVSNKLYAQA) provides a ligand contact to FAD.

It belongs to the class-II pyridine nucleotide-disulfide oxidoreductase family. As to quaternary structure, homodimer. FAD serves as cofactor.

It is found in the cytoplasm. The enzyme catalyses [thioredoxin]-dithiol + NADP(+) = [thioredoxin]-disulfide + NADPH + H(+). The sequence is that of Thioredoxin reductase (trxB) from Borreliella burgdorferi (strain ATCC 35210 / DSM 4680 / CIP 102532 / B31) (Borrelia burgdorferi).